Here is a 254-residue protein sequence, read N- to C-terminus: 3-deoxy-manno-octulosonate cytidylyltransferase (254 aa).

The protein belongs to the KdsB family.

Its subcellular location is the cytoplasm. The enzyme catalyses 3-deoxy-alpha-D-manno-oct-2-ulosonate + CTP = CMP-3-deoxy-beta-D-manno-octulosonate + diphosphate. It participates in nucleotide-sugar biosynthesis; CMP-3-deoxy-D-manno-octulosonate biosynthesis; CMP-3-deoxy-D-manno-octulosonate from 3-deoxy-D-manno-octulosonate and CTP: step 1/1. The protein operates within bacterial outer membrane biogenesis; lipopolysaccharide biosynthesis. Its function is as follows. Activates KDO (a required 8-carbon sugar) for incorporation into bacterial lipopolysaccharide in Gram-negative bacteria. This is 3-deoxy-manno-octulosonate cytidylyltransferase from Chlamydia pneumoniae (Chlamydophila pneumoniae).